The chain runs to 350 residues: Biotin synthase (350 aa).

In terms of domain architecture, Radical SAM core spans 41–265; the sequence is NEVQISRLLS…VMPLSRVRLS (225 aa). [4Fe-4S] cluster is bound by residues cysteine 56, cysteine 60, and cysteine 63. The [2Fe-2S] cluster site is built by cysteine 100, cysteine 131, cysteine 191, and arginine 263.

This sequence belongs to the radical SAM superfamily. Biotin synthase family. As to quaternary structure, homodimer. [4Fe-4S] cluster is required as a cofactor. It depends on [2Fe-2S] cluster as a cofactor.

The catalysed reaction is (4R,5S)-dethiobiotin + (sulfur carrier)-SH + 2 reduced [2Fe-2S]-[ferredoxin] + 2 S-adenosyl-L-methionine = (sulfur carrier)-H + biotin + 2 5'-deoxyadenosine + 2 L-methionine + 2 oxidized [2Fe-2S]-[ferredoxin]. The protein operates within cofactor biosynthesis; biotin biosynthesis; biotin from 7,8-diaminononanoate: step 2/2. Its function is as follows. Catalyzes the conversion of dethiobiotin (DTB) to biotin by the insertion of a sulfur atom into dethiobiotin via a radical-based mechanism. The polypeptide is Biotin synthase (Shewanella loihica (strain ATCC BAA-1088 / PV-4)).